The sequence spans 673 residues: NADH-quinone oxidoreductase chain 3 (673 aa).

The 2Fe-2S ferredoxin-type domain occupies 5–90; it reads RKIKIDDTII…PSEIRTNSPM (86 aa). [2Fe-2S] cluster-binding residues include Cys-37, Cys-48, Cys-51, and Cys-66. The 40-residue stretch at 90–129 folds into the 4Fe-4S His(Cys)3-ligated-type domain; it reads MVKKAREGVMEFLLINHPLDCPICDQGGECDLQDQAMAYG. [4Fe-4S] cluster-binding residues include His-106, Cys-110, Cys-113, Cys-119, Cys-158, Cys-161, Cys-164, and Cys-208. The region spanning 227-283 is the 4Fe-4S Mo/W bis-MGD-type domain; sequence LTKTESIDVMDALGSSIRIDTKGREVMRILPRNHDGVNEEWISDKTRFVWDGLRRQR.

Belongs to the complex I 75 kDa subunit family. As to quaternary structure, NDH-1 is composed of at least 14 different subunits, Nqo1 to Nqo14. The complex has a L-shaped structure, with the hydrophobic arm (subunits Nqo7, Nqo8, Nqo10 to Nqo14) embedded in the inner membrane and the hydrophilic peripheral arm (subunits Nqo1 to Nqo6, Nqo9) protruding into the bacterial cytoplasm. The hydrophilic domain contains all the redox centers. [2Fe-2S] cluster serves as cofactor. Requires [4Fe-4S] cluster as cofactor.

The protein localises to the cell inner membrane. It carries out the reaction a quinone + NADH + 5 H(+)(in) = a quinol + NAD(+) + 4 H(+)(out). Its function is as follows. NDH-1 shuttles electrons from NADH, via FMN and iron-sulfur (Fe-S) centers, to quinones in the respiratory chain. The immediate electron acceptor for the enzyme in this species is believed to be ubiquinone. Couples the redox reaction to proton translocation (for every two electrons transferred, four hydrogen ions are translocated across the cytoplasmic membrane), and thus conserves the redox energy in a proton gradient. This is NADH-quinone oxidoreductase chain 3 from Paracoccus denitrificans.